A 155-amino-acid polypeptide reads, in one-letter code: Small ribosomal subunit protein uS7 (155 aa).

Belongs to the universal ribosomal protein uS7 family. Part of the 30S ribosomal subunit. Contacts proteins S9 and S11.

Its function is as follows. One of the primary rRNA binding proteins, it binds directly to 16S rRNA where it nucleates assembly of the head domain of the 30S subunit. Is located at the subunit interface close to the decoding center, probably blocks exit of the E-site tRNA. This Xylella fastidiosa (strain M23) protein is Small ribosomal subunit protein uS7.